A 212-amino-acid polypeptide reads, in one-letter code: Riboflavin kinase (212 aa).

Residues methionine 1–serine 83 form a unknown region. Residues isoleucine 84 to leucine 212 are riboflavin kinase. Glycine 93–alanine 98 serves as a coordination point for CDP. 2 residues coordinate Mg(2+): threonine 122 and asparagine 124. FMN-binding residues include threonine 179 and glutamate 187. Valine 192–arginine 195 lines the CDP pocket.

The protein belongs to the archaeal riboflavin kinase family. Mg(2+) serves as cofactor.

It carries out the reaction riboflavin + CTP = CDP + FMN + H(+). It functions in the pathway cofactor biosynthesis; FMN biosynthesis; FMN from riboflavin (CTP route): step 1/1. Its function is as follows. Catalyzes the CTP-dependent phosphorylation of riboflavin (vitamin B2) to form flavin mononucleotide (FMN). This is Riboflavin kinase (ribK) from Pyrobaculum calidifontis (strain DSM 21063 / JCM 11548 / VA1).